Here is a 450-residue protein sequence, read N- to C-terminus: 23S rRNA (uracil(1939)-C(5))-methyltransferase RlmD (450 aa).

Residues C81, C87, C90, and C173 each coordinate [4Fe-4S] cluster. Residues Q276, F305, N310, E326, D353, and D372 each coordinate S-adenosyl-L-methionine. C402 functions as the Nucleophile in the catalytic mechanism.

It belongs to the class I-like SAM-binding methyltransferase superfamily. RNA M5U methyltransferase family. RlmD subfamily.

It carries out the reaction uridine(1939) in 23S rRNA + S-adenosyl-L-methionine = 5-methyluridine(1939) in 23S rRNA + S-adenosyl-L-homocysteine + H(+). In terms of biological role, catalyzes the formation of 5-methyl-uridine at position 1939 (m5U1939) in 23S rRNA. The polypeptide is 23S rRNA (uracil(1939)-C(5))-methyltransferase RlmD (Idiomarina loihiensis (strain ATCC BAA-735 / DSM 15497 / L2-TR)).